We begin with the raw amino-acid sequence, 639 residues long: Poly(A)-specific ribonuclease PARN (639 aa).

Residues Asp-28 and Glu-30 each contribute to the a divalent metal cation site. Phosphoserine occurs at positions 163 and 167. The R3H domain maps to 178–245 (KKFIDQVVEK…ERYIVISKVD (68 aa)). The residue at position 220 (Lys-220) is an N6-acetyllysine. A divalent metal cation-binding residues include Asp-292 and Asp-382. Lys-499 carries the N6-acetyllysine modification. A Phosphoserine modification is found at Ser-530. Ser-557 bears the Phosphoserine; by MAPKAPK2 mark. A disordered region spans residues 560–639 (APSTVGKRNL…ATLFEVPDTW (80 aa)). Ser-583 and Ser-587 each carry phosphoserine. A compositionally biased stretch (basic residues) spans 606–615 (KKAKKLKRMK). Ser-619, Ser-623, and Ser-628 each carry phosphoserine. Residue Thr-631 is modified to Phosphothreonine.

The protein belongs to the CAF1 family. Homodimer. Found in a mRNA decay complex with RENT1, RENT2 and RENT3B. Interacts with KHSRP. Interacts with CELF1/CUGBP1. Interacts with ZC3HAV1 in an RNA-independent manner. Interacts with DHX36. Mg(2+) serves as cofactor. Phosphorylation by MAPKAPK2, preventing GADD45A mRNA degradation after genotoxic stress. Ubiquitous.

The protein resides in the nucleus. It is found in the cytoplasm. Its subcellular location is the nucleolus. The catalysed reaction is Exonucleolytic cleavage of poly(A) to 5'-AMP.. Functionally, 3'-exoribonuclease that has a preference for poly(A) tails of mRNAs, thereby efficiently degrading poly(A) tails. Exonucleolytic degradation of the poly(A) tail is often the first step in the decay of eukaryotic mRNAs and is also used to silence certain maternal mRNAs translationally during oocyte maturation and early embryonic development. Interacts with both the 3'-end poly(A) tail and the 5'-end cap structure during degradation, the interaction with the cap structure being required for an efficient degradation of poly(A) tails. Involved in nonsense-mediated mRNA decay, a critical process of selective degradation of mRNAs that contain premature stop codons. Also involved in degradation of inherently unstable mRNAs that contain AU-rich elements (AREs) in their 3'-UTR, possibly via its interaction with KHSRP. Probably mediates the removal of poly(A) tails of AREs mRNAs, which constitutes the first step of destabilization. Also able to recognize and trim poly(A) tails of microRNAs such as MIR21 and H/ACA box snoRNAs (small nucleolar RNAs) leading to microRNAs degradation or snoRNA increased stability. The protein is Poly(A)-specific ribonuclease PARN (PARN) of Homo sapiens (Human).